A 176-amino-acid polypeptide reads, in one-letter code: Isopentenyl-diphosphate Delta-isomerase (176 aa).

Residues histidine 23 and histidine 29 each contribute to the Mn(2+) site. The 135-residue stretch at 27–161 (LRHLAISVFV…PERFTPWLKI (135 aa)) folds into the Nudix hydrolase domain. Residue cysteine 63 is part of the active site. Cysteine 63 is a binding site for Mg(2+). Histidine 65 serves as a coordination point for Mn(2+). A Mg(2+)-binding site is contributed by glutamate 83. Residues glutamate 109 and glutamate 111 each contribute to the Mn(2+) site. Glutamate 111 is an active-site residue.

This sequence belongs to the IPP isomerase type 1 family. Mg(2+) is required as a cofactor. Requires Mn(2+) as cofactor.

The protein resides in the cytoplasm. It carries out the reaction isopentenyl diphosphate = dimethylallyl diphosphate. It functions in the pathway isoprenoid biosynthesis; dimethylallyl diphosphate biosynthesis; dimethylallyl diphosphate from isopentenyl diphosphate: step 1/1. The protein operates within porphyrin-containing compound metabolism; chlorophyll biosynthesis. In terms of biological role, catalyzes the 1,3-allylic rearrangement of the homoallylic substrate isopentenyl (IPP) to its highly electrophilic allylic isomer, dimethylallyl diphosphate (DMAPP). The sequence is that of Isopentenyl-diphosphate Delta-isomerase from Rhodobacter capsulatus (strain ATCC BAA-309 / NBRC 16581 / SB1003).